A 250-amino-acid chain; its full sequence is Probable transcriptional regulatory protein Plut_1643 (250 aa).

This sequence belongs to the TACO1 family.

It is found in the cytoplasm. The chain is Probable transcriptional regulatory protein Plut_1643 from Chlorobium luteolum (strain DSM 273 / BCRC 81028 / 2530) (Pelodictyon luteolum).